Reading from the N-terminus, the 447-residue chain is Nuclear envelope integral membrane protein 2 (447 aa).

Positions 1-28 (MGPRRLPWARPGPALGLLLLALAGAVPA) are cleaved as a signal peptide. The next 5 membrane-spanning stretches (helical) occupy residues 144–164 (EMLDGKLLFLFAAGIFLFHFA), 173–193 (FFYLSGIILGVLALLVFVLLA), 202–222 (STFWILLSGCWMSSLYLIYCF), 235–255 (IYVLGYFVAVGTLSFATCYQH), and 275–295 (AFVFIYCGVNIPQVAYAIIAV). Residues 410–438 (TRTESEQDETTSYIHEGDDENEDEIHEPI) form a disordered region.

This sequence belongs to the NEMP family.

The protein resides in the nucleus inner membrane. The sequence is that of Nuclear envelope integral membrane protein 2 (NEMP2) from Gallus gallus (Chicken).